The primary structure comprises 270 residues: MAAPGEALTSSGYIAHHLSNLSLYKLGLVGSETSFWNVHIDSLFFSWFTGLIFLGIFYKVAKRTTAGVPGKLQCAVEMIVEFVADNVKDTFHGRNPLIAPLALTIFCWVFLMNVMDLVPIDFLPYPAEHWLGIPYLKVVPSADVNITMAMALGVFALMIYYSIKVKGLGGFAKELALHPFNHPLMIPFNLLIEVVSLLAKPLSLGMRLFGNMFAGEVVFILCAAMLPWYLQWMGSLPWAIFHILVITIQAFVFMMLTIVYLSMAHEDPDH.

5 consecutive transmembrane segments (helical) span residues 38 to 58 (VHID…GIFY), 98 to 118 (IAPL…MDLV), 143 to 163 (DVNI…YYSI), 208 to 228 (LFGN…MLPW), and 239 to 259 (AIFH…LTIV).

Belongs to the ATPase A chain family. F-type ATPases have 2 components, CF(1) - the catalytic core - and CF(0) - the membrane proton channel. CF(1) has five subunits: alpha(3), beta(3), gamma(1), delta(1), epsilon(1). CF(0) has three main subunits: a(1), b(2) and c(9-12). The alpha and beta chains form an alternating ring which encloses part of the gamma chain. CF(1) is attached to CF(0) by a central stalk formed by the gamma and epsilon chains, while a peripheral stalk is formed by the delta and b chains.

Its subcellular location is the cell inner membrane. Functionally, key component of the proton channel; it plays a direct role in the translocation of protons across the membrane. The protein is ATP synthase subunit a of Vibrio alginolyticus.